We begin with the raw amino-acid sequence, 199 residues long: Probable NADH dehydrogenase [ubiquinone] iron-sulfur protein 7, mitochondrial (199 aa).

Residues 1 to 16 (MLSALRTAGALSTRRL) constitute a mitochondrion transit peptide. The [4Fe-4S] cluster site is built by C74, C75, C139, and C169.

It belongs to the complex I 20 kDa subunit family. Complex I is composed of 45 different subunits This is a component of the iron-sulfur (IP) fragment of the enzyme. It depends on [4Fe-4S] cluster as a cofactor.

The protein resides in the mitochondrion. It carries out the reaction a ubiquinone + NADH + 5 H(+)(in) = a ubiquinol + NAD(+) + 4 H(+)(out). Core subunit of the mitochondrial membrane respiratory chain NADH dehydrogenase (Complex I) that is believed to belong to the minimal assembly required for catalysis. Complex I functions in the transfer of electrons from NADH to the respiratory chain. The immediate electron acceptor for the enzyme is believed to be ubiquinone. The chain is Probable NADH dehydrogenase [ubiquinone] iron-sulfur protein 7, mitochondrial from Caenorhabditis briggsae.